The following is a 670-amino-acid chain: RxLR effector protein PSR2 (670 aa).

The first 17 residues, 1–17 (MRLQCVVLFAALTLVAA), serve as a signal peptide directing secretion. The RxLR-dEER signature appears at 39 to 54 (RLLRPGNPAGKEDEER). The N-linked (GlcNAc...) asparagine glycan is linked to asparagine 57. The stretch at 79–126 (KLLKWADAKKPPETVFTRLRLDKTGTQLFDNTDFPVWAAYTRSVAQTD) is one WY1 repeat. A 7 X 93 AA tandem repeats region spans residues 79–670 (KLLKWADAKK…YSAKFKVRWG (592 aa)). The LWY2 repeat unit spans residues 127–217 (SEASAVMLKT…NYMKLSNKEN (91 aa)). Residues 218-308 (PKAQTTLIAT…KYINYYNKEN (91 aa)) form an LWY3 repeat. The LWY4 repeat unit spans residues 309 to 399 (PDEKTTVLAK…KYTENFNLNK (91 aa)). The LWY5 repeat unit spans residues 400–492 (EINEQVTAIQ…KFLEKYNTAN (93 aa)). Residues 493–583 (PGKEQTMISG…KYLNAFNDKA (91 aa)) form an LWY6 repeat. The stretch at 584–670 (PVKKALMIDT…YSAKFKVRWG (87 aa)) is one LWY7 repeat.

The protein belongs to the RxLR effector family. In terms of assembly, interacts with host dsRNA-binding protein DRB4.

It is found in the secreted. Its subcellular location is the host cell. Functionally, secreted effector that possesses RNA silencing suppression activity by inhibiting the biogenesis of small RNAs in the host plant to promote enhanced susceptibility of host to the pathogen during infection. Interferes with secondary siRNA production by associating with host dsRNA-binding protein DRB4. Inhibits the host salicylic acid pathway during infection. The protein is RxLR effector protein PSR2 of Phytophthora sojae (Soybean stem and root rot agent).